The following is a 950-amino-acid chain: Glycine dehydrogenase (decarboxylating) (950 aa).

Lysine 698 carries the N6-(pyridoxal phosphate)lysine modification.

The protein belongs to the GcvP family. As to quaternary structure, the glycine cleavage system is composed of four proteins: P, T, L and H. Pyridoxal 5'-phosphate serves as cofactor.

It catalyses the reaction N(6)-[(R)-lipoyl]-L-lysyl-[glycine-cleavage complex H protein] + glycine + H(+) = N(6)-[(R)-S(8)-aminomethyldihydrolipoyl]-L-lysyl-[glycine-cleavage complex H protein] + CO2. The glycine cleavage system catalyzes the degradation of glycine. The P protein binds the alpha-amino group of glycine through its pyridoxal phosphate cofactor; CO(2) is released and the remaining methylamine moiety is then transferred to the lipoamide cofactor of the H protein. The protein is Glycine dehydrogenase (decarboxylating) of Neisseria gonorrhoeae (strain NCCP11945).